The sequence spans 831 residues: Periplasmic nitrate reductase (831 aa).

Positions Met1–Ala29 form a signal peptide, tat-type signal. Residues Leu41–Asp97 form the 4Fe-4S Mo/W bis-MGD-type domain. [4Fe-4S] cluster-binding residues include Cys48, Cys51, Cys55, and Cys83. Mo-bis(molybdopterin guanine dinucleotide) is bound by residues Lys85, Gln152, Asn177, Cys181, Trp214–Met221, Ser245–His249, Gln264–Asp266, Met375, Gln379, Asn485, Ser511–Asp512, Lys534, Asp561, and Thr721–Ser730. Position 797 (Trp797) interacts with substrate. Mo-bis(molybdopterin guanine dinucleotide)-binding residues include Asn805 and Lys822.

The protein belongs to the prokaryotic molybdopterin-containing oxidoreductase family. NasA/NapA/NarB subfamily. Component of the periplasmic nitrate reductase NapAB complex composed of NapA and NapB. Requires [4Fe-4S] cluster as cofactor. Mo-bis(molybdopterin guanine dinucleotide) is required as a cofactor. Post-translationally, predicted to be exported by the Tat system. The position of the signal peptide cleavage has not been experimentally proven.

The protein localises to the periplasm. It carries out the reaction 2 Fe(II)-[cytochrome] + nitrate + 2 H(+) = 2 Fe(III)-[cytochrome] + nitrite + H2O. Catalytic subunit of the periplasmic nitrate reductase complex NapAB. Receives electrons from NapB and catalyzes the reduction of nitrate to nitrite. The sequence is that of Periplasmic nitrate reductase from Cupriavidus pinatubonensis (strain JMP 134 / LMG 1197) (Cupriavidus necator (strain JMP 134)).